The primary structure comprises 502 residues: ATP synthase subunit alpha (502 aa).

An ATP-binding site is contributed by 169 to 176 (GDRQTGKT).

Belongs to the ATPase alpha/beta chains family. As to quaternary structure, F-type ATPases have 2 components, CF(1) - the catalytic core - and CF(0) - the membrane proton channel. CF(1) has five subunits: alpha(3), beta(3), gamma(1), delta(1), epsilon(1). CF(0) has three main subunits: a(1), b(2) and c(9-12). The alpha and beta chains form an alternating ring which encloses part of the gamma chain. CF(1) is attached to CF(0) by a central stalk formed by the gamma and epsilon chains, while a peripheral stalk is formed by the delta and b chains.

It localises to the cell inner membrane. The enzyme catalyses ATP + H2O + 4 H(+)(in) = ADP + phosphate + 5 H(+)(out). Its function is as follows. Produces ATP from ADP in the presence of a proton gradient across the membrane. The alpha chain is a regulatory subunit. This Citrifermentans bemidjiense (strain ATCC BAA-1014 / DSM 16622 / JCM 12645 / Bem) (Geobacter bemidjiensis) protein is ATP synthase subunit alpha.